A 445-amino-acid chain; its full sequence is Phosphoglucosamine mutase (445 aa).

Catalysis depends on S102, which acts as the Phosphoserine intermediate. Mg(2+)-binding residues include S102, D241, D243, and D245. Residue S102 is modified to Phosphoserine.

The protein belongs to the phosphohexose mutase family. Mg(2+) is required as a cofactor. In terms of processing, activated by phosphorylation.

The catalysed reaction is alpha-D-glucosamine 1-phosphate = D-glucosamine 6-phosphate. In terms of biological role, catalyzes the conversion of glucosamine-6-phosphate to glucosamine-1-phosphate. This Shewanella denitrificans (strain OS217 / ATCC BAA-1090 / DSM 15013) protein is Phosphoglucosamine mutase.